The sequence spans 340 residues: UDP-3-O-acylglucosamine N-acyltransferase (340 aa).

His-240 (proton acceptor) is an active-site residue.

Belongs to the transferase hexapeptide repeat family. LpxD subfamily. In terms of assembly, homotrimer.

The catalysed reaction is a UDP-3-O-[(3R)-3-hydroxyacyl]-alpha-D-glucosamine + a (3R)-hydroxyacyl-[ACP] = a UDP-2-N,3-O-bis[(3R)-3-hydroxyacyl]-alpha-D-glucosamine + holo-[ACP] + H(+). The protein operates within bacterial outer membrane biogenesis; LPS lipid A biosynthesis. Its function is as follows. Catalyzes the N-acylation of UDP-3-O-acylglucosamine using 3-hydroxyacyl-ACP as the acyl donor. Is involved in the biosynthesis of lipid A, a phosphorylated glycolipid that anchors the lipopolysaccharide to the outer membrane of the cell. The sequence is that of UDP-3-O-acylglucosamine N-acyltransferase from Pseudoalteromonas translucida (strain TAC 125).